We begin with the raw amino-acid sequence, 418 residues long: Gamma-glutamyl phosphate reductase (418 aa).

Belongs to the gamma-glutamyl phosphate reductase family.

The protein resides in the cytoplasm. It catalyses the reaction L-glutamate 5-semialdehyde + phosphate + NADP(+) = L-glutamyl 5-phosphate + NADPH + H(+). The protein operates within amino-acid biosynthesis; L-proline biosynthesis; L-glutamate 5-semialdehyde from L-glutamate: step 2/2. Its function is as follows. Catalyzes the NADPH-dependent reduction of L-glutamate 5-phosphate into L-glutamate 5-semialdehyde and phosphate. The product spontaneously undergoes cyclization to form 1-pyrroline-5-carboxylate. This is Gamma-glutamyl phosphate reductase from Colwellia psychrerythraea (strain 34H / ATCC BAA-681) (Vibrio psychroerythus).